The chain runs to 267 residues: Dolichol-phosphate mannosyltransferase (267 aa).

Ser2 carries the N-acetylserine modification. The Cytoplasmic portion of the chain corresponds to Ser2–Lys238. GDP-alpha-D-mannose contacts are provided by Pro10, Tyr12, Glu14, Val42, Asp44, Asp95, Ala96, Asp97, Gln99, and Arg122. Positions 97 and 99 each coordinate Mg(2+). Residues Asp97 and Gln99 each contribute to the Mn(2+) site. Position 141 is a phosphoserine; by PKA (Ser141). GDP-alpha-D-mannose-binding residues include Lys183, Arg212, and Lys218. The chain crosses the membrane as a helical; Anchor for type IV membrane protein span at residues Phe239–Cys259. The Lumenal segment spans residues Tyr260–Phe267.

Belongs to the glycosyltransferase 2 family. Interacts with the C-terminus of SAC1, thereby sequestering it to the endoplasmic reticulum in exponentially growing cells. Under nutrient limitation conditions, this interaction is rapidly abolished. The cofactor is Mg(2+). It depends on Mn(2+) as a cofactor. Requires Ca(2+) as cofactor.

Its subcellular location is the endoplasmic reticulum membrane. The enzyme catalyses a di-trans,poly-cis-dolichyl phosphate + GDP-alpha-D-mannose = a di-trans,poly-cis-dolichyl beta-D-mannosyl phosphate + GDP. The protein operates within protein modification; protein glycosylation. With respect to regulation, inhibited by acetylsalicylic acid (aspirin). Functionally, transfers mannose from GDP-mannose to dolichol monophosphate to form dolichol phosphate mannose (Dol-P-Man) which is the mannosyl donor in pathways leading to N-glycosylation, glycosyl phosphatidylinositol membrane anchoring, and O-mannosylation of proteins. In Saccharomyces cerevisiae (strain ATCC 204508 / S288c) (Baker's yeast), this protein is Dolichol-phosphate mannosyltransferase.